Here is a 2176-residue protein sequence, read N- to C-terminus: Methyl-CpG-binding domain-containing protein 9 (2176 aa).

A compositionally biased stretch (polar residues) spans 1-13 (MEPTDSTNEQLGD). 2 disordered regions span residues 1–20 (MEPT…AAVK) and 28–85 (GIDL…RDAS). The PHD-type 1 zinc-finger motif lies at 83 to 133 (DASCGACGRPESIELVVVCDACERGFHMSCVNDGVEAAPSADWMCSDCRTG). The segment at 86 to 131 (CGACGRPESIELVVVCDACERGFHMSCVNDGVEAAPSADWMCSDCR) adopts an RING-type 1; degenerate zinc-finger fold. One can recognise an MBD domain in the interval 258–327 (RHFISERHGV…MDAEIRNENS (70 aa)). The 54-residue stretch at 403 to 456 (GCPMQFEDFFVLSLGRIDIRQSYHNVNVIYPIGYKSCWHDKITGSLFTCEVSDG) folds into the FYR N-terminal domain. Residues 491-511 (EQNSDKLSNRRDSTQERDDDA) are a coiled coil. An FYR C-terminal domain is found at 550–698 (SSRVDFDKNL…ESCTNYRTLK (149 aa)). 3 short sequence motifs (nuclear localization signal) span residues 914–921 (SRRGRKKD), 1124–1131 (KKRTYISV), and 1256–1263 (YRKLECLS). The stretch at 1098–1137 (PTKKAVLSLLADIRGGDLVQRSIKGTKKRTYISVSDVIMK) is one Pumilio repeat. The Bromo domain occupies 1130 to 1245 (SVSDVIMKKC…EKFKSLYEAE (116 aa)). Positions 1251-1273 (QKLKDYRKLECLSAEMKKEIKDI) form a coiled coil. Residues 1287–1337 (EGVCKVCGVDKDDDSVLLCDTCDAEYHTYCLNPPLIRIPDGNWYCPSCVIA) form a PHD-type 2 zinc finger. The segment at 1290 to 1335 (CKVCGVDKDDDSVLLCDTCDAEYHTYCLNPPLIRIPDGNWYCPSCV) adopts an RING-type 2; degenerate zinc-finger fold. Residues 1337 to 1344 (AKRMAQEA) carry the Nuclear localization signal motif. Residues 1410–1437 (QHLEQCAEAIIEMQQKLRSLSSEWKNAK) adopt a coiled-coil conformation. Disordered stretches follow at residues 1472–1553 (GCDP…NLPE) and 1565–1595 (GRNH…QELQ). 3 stretches are compositionally biased toward polar residues: residues 1492-1513 (SSTA…TQPG), 1523-1532 (KISSPETISS), and 1585-1595 (DASSQASQELQ). The stretch at 1588 to 1628 (SQASQELQACQQDLSATSNEIQNLQQSIRSIESQLLKQSIR) forms a coiled coil. The Nuclear localization signal signature appears at 1761-1768 (EKRYGPCI). Residues 2136 to 2176 (IDETKPIISLPDQKSQPVSDSQERSSRVRRSGKKRKEPEGS) are disordered.

Interacts with histone H4. In terms of tissue distribution, expressed in leaves, buds, flowers and stems.

It localises to the nucleus. The catalysed reaction is L-lysyl-[protein] + acetyl-CoA = N(6)-acetyl-L-lysyl-[protein] + CoA + H(+). In terms of biological role, probable transcriptional regulator that acts as a histone acetyltransferase. Mediates the acetylation of histone H3 and H4 of target loci (e.g. FLC). Involved in an auxin-independent regulation of shoot branching and flowering time. This Arabidopsis thaliana (Mouse-ear cress) protein is Methyl-CpG-binding domain-containing protein 9 (MBD9).